Reading from the N-terminus, the 416-residue chain is MPKSPFLLEAQARGLIFQCTDLDALDEAMLAGPITAYVGFDPTADSLHVGNALTIMALRLLQKHGHRPIALMGGGTAKIGDPSFRDEARSLITNETIAHNIAGIEKSLRQFITFSDEDPSSGAILANNADWLDKLSYINLLQDVGVHFSVSRMLGFDSVRQRLEREQGLTFLEFNYSILQSYDFRELNRRHGAVLQMGGSDQWGNIVSGIDLTRRTDGKQIFGLTTPLVTTSSGAKMGKSAKGATWVRPEKLPVFEYWQFWRNTEDADVGRFLKFFTDLPVEECERLGALEGSEINEAKKILATEATAICHGRGAAEEAAETARRVFEQGSAQAALPEIDLPANLIAEGLPAFRVFQEAGLAASGGEARRLIRGGGGRVNDVVVSDENQTFTLDDLRDGVLKVSYGKKKHILLRPV.

L-tyrosine is bound at residue Tyr37. The short motif at 42–51 (PTADSLHVGN) is the 'HIGH' region element. Positions 176 and 180 each coordinate L-tyrosine. The short motif at 236-240 (KMGKS) is the 'KMSKS' region element. An ATP-binding site is contributed by Lys239. The S4 RNA-binding domain maps to 350–416 (LPAFRVFQEA…KKKHILLRPV (67 aa)).

Belongs to the class-I aminoacyl-tRNA synthetase family. TyrS type 1 subfamily. In terms of assembly, homodimer.

It is found in the cytoplasm. The enzyme catalyses tRNA(Tyr) + L-tyrosine + ATP = L-tyrosyl-tRNA(Tyr) + AMP + diphosphate + H(+). Catalyzes the attachment of tyrosine to tRNA(Tyr) in a two-step reaction: tyrosine is first activated by ATP to form Tyr-AMP and then transferred to the acceptor end of tRNA(Tyr). This is Tyrosine--tRNA ligase from Gluconobacter oxydans (strain 621H) (Gluconobacter suboxydans).